The following is a 453-amino-acid chain: Adenosylmethionine-8-amino-7-oxononanoate aminotransferase (453 aa).

Position 118-119 (118-119 (GA)) interacts with pyridoxal 5'-phosphate. Y151 serves as a coordination point for substrate. D257 is a pyridoxal 5'-phosphate binding site. Residues K286, G321, and R416 each contribute to the substrate site. K286 carries the N6-(pyridoxal phosphate)lysine modification.

Belongs to the class-III pyridoxal-phosphate-dependent aminotransferase family. BioA subfamily. As to quaternary structure, homodimer. It depends on pyridoxal 5'-phosphate as a cofactor.

The protein localises to the cytoplasm. It carries out the reaction (8S)-8-amino-7-oxononanoate + S-adenosyl-L-methionine = S-adenosyl-4-methylsulfanyl-2-oxobutanoate + (7R,8S)-7,8-diammoniononanoate. It functions in the pathway cofactor biosynthesis; biotin biosynthesis; 7,8-diaminononanoate from 8-amino-7-oxononanoate (SAM route): step 1/1. In terms of biological role, catalyzes the transfer of the alpha-amino group from S-adenosyl-L-methionine (SAM) to 7-keto-8-aminopelargonic acid (KAPA) to form 7,8-diaminopelargonic acid (DAPA). It is the only aminotransferase known to utilize SAM as an amino donor. The protein is Adenosylmethionine-8-amino-7-oxononanoate aminotransferase of Aquifex aeolicus (strain VF5).